Reading from the N-terminus, the 123-residue chain is Large ribosomal subunit protein eL8 (123 aa).

The protein belongs to the eukaryotic ribosomal protein eL8 family. Part of the 50S ribosomal subunit. Probably part of the RNase P complex.

The protein localises to the cytoplasm. Multifunctional RNA-binding protein that recognizes the K-turn motif in ribosomal RNA, the RNA component of RNase P, box H/ACA, box C/D and box C'/D' sRNAs. In Methanopyrus kandleri (strain AV19 / DSM 6324 / JCM 9639 / NBRC 100938), this protein is Large ribosomal subunit protein eL8.